Reading from the N-terminus, the 258-residue chain is MSASRIRAKCFRLGQRCHTRFYDVLKKDIDNVRRGFADAFNPRLAKLLSPLSHVDVQRAVRISMSFEVNLGRRRPDCVCIIQTESSGAGKTVCFIVELKSCRFSANIHTPTKYHQFCEGMRQLRDTMALIKETTPTGSDEIMVTPLLVFVSQRGLNLLQVTRLPPKVIHGNLVMLASHLENVAEYTPPIRSVRERRRLCKKKIHVCSLAKKRAKSCHRSALTKFEENAACGVDLPLRRPSLGACGGILQSITGMFSHG.

This sequence belongs to the herpesviridae UL24 family.

It localises to the virion. The protein localises to the host cytoplasm. It is found in the host nucleus. The protein resides in the host nucleolus. Its subcellular location is the host Golgi apparatus. Its function is as follows. May participate in nuclear egress of viral particles. Plays a role in the dispersal of several host nucleolar proteins including NCL/nucleolin and NPM1. Since deletion of host NCL/nucleolin negatively impact on nuclear egress, UL24 supposedly acts on this process through its effect on host nucleoli. The protein is Protein UL24 homolog of Varicella-zoster virus (strain Dumas) (HHV-3).